Reading from the N-terminus, the 500-residue chain is Probable zinc metalloprotease MGYG_02393 (500 aa).

An N-terminal signal peptide occupies residues 1-24 (MHLSMGGLLPGLALLASANALALA). N-linked (GlcNAc...) asparagine glycans are attached at residues Asn61, Asn103, and Asn124. The Zn(2+) site is built by His174, Asp194, and Glu230. The N-linked (GlcNAc...) asparagine glycan is linked to Asn245. Asp257 contacts Zn(2+). The Fibronectin type-III domain occupies 414 to 500 (MPRNVRVNTS…ERGVAVLPFP (87 aa)). Residues Asn421 and Asn427 are each glycosylated (N-linked (GlcNAc...) asparagine).

The protein belongs to the peptidase M28 family. M28B subfamily. Requires Zn(2+) as cofactor.

It localises to the secreted. The chain is Probable zinc metalloprotease MGYG_02393 from Arthroderma gypseum (strain ATCC MYA-4604 / CBS 118893) (Microsporum gypseum).